The sequence spans 258 residues: 5'-nucleotidase SurE (258 aa).

A divalent metal cation-binding residues include Asp-8, Asp-9, Ser-39, and Asn-95.

It belongs to the SurE nucleotidase family. A divalent metal cation is required as a cofactor.

The protein localises to the cytoplasm. It catalyses the reaction a ribonucleoside 5'-phosphate + H2O = a ribonucleoside + phosphate. Nucleotidase that shows phosphatase activity on nucleoside 5'-monophosphates. The protein is 5'-nucleotidase SurE of Methanobrevibacter smithii (strain ATCC 35061 / DSM 861 / OCM 144 / PS).